The following is a 226-amino-acid chain: Neuromodulin (226 aa).

Residues 1-226 (MLCCMRRTKQ…EDPEADQEHA (226 aa)) form a disordered region. Residues Cys3 and Cys4 are each lipidated (S-palmitoyl cysteine). Residues 9–32 (KQVEKNDEDQKIEQDGVKPEDKAH) show a composition bias toward basic and acidic residues. The IQ domain occupies 31–60 (AHKAATKIQASFRGHITRKKLKDEKKGDAP). Position 41 is a phosphoserine; by PHK and PKC (Ser41). Positions 51 to 84 (LKDEKKGDAPAAEAEAKEKDDAPVADGVEKKEGD) are enriched in basic and acidic residues. Residues 85–97 (GSATTDAAPATSP) are compositionally biased toward low complexity. Phosphoserine occurs at positions 86 and 96. Residues 98 to 127 (KAEEPSKAGDAPSEEKKGEGDAAPSEEKAG) are compositionally biased toward basic and acidic residues. Residues 128–139 (SAETESAAKATT) are compositionally biased toward low complexity. Residues Ser142, Ser144, and Ser145 each carry the phosphoserine modification. The segment covering 146 to 158 (KAEDGPAKEEPKQ) has biased composition (basic and acidic residues). The segment covering 159-192 (ADVPAAVTDAAATTPAAEDAAKAAQPPTETAESS) has biased composition (low complexity). A Phosphothreonine modification is found at Thr172. A phosphoserine mark is found at Ser191 and Ser192. Positions 201–214 (VDEAKPKESARQDE) are enriched in basic and acidic residues. Acidic residues predominate over residues 215–226 (GKEDPEADQEHA).

It belongs to the neuromodulin family. In terms of assembly, identified in a complex containing FGFR4, NCAM1, CDH2, PLCG1, FRS2, SRC, SHC1, GAP43 and CTTN. Interacts (via IQ domain) with calmodulin. Binds calmodulin with a greater affinity in the absence of Ca(2+) than in its presence. Phosphorylated. Phosphorylation of this protein by a protein kinase C is specifically correlated with certain forms of synaptic plasticity. In terms of processing, palmitoylated by ZDHHC3. Palmitoylation is regulated by ARF6 and is essential for plasma membrane association and axonal and dendritic filopodia induction. Deacylated by LYPLA2. Expressed in hippocampal neurons, with highest levels of expression in the CA4 and CA3 neurons and lower levels in CA1 neurons. Expressed in the dorsal root ganglion.

The protein resides in the cell membrane. It is found in the cell projection. Its subcellular location is the growth cone. It localises to the growth cone membrane. The protein localises to the synapse. The protein resides in the filopodium membrane. It is found in the perikaryon. Its subcellular location is the dendrite. It localises to the axon. The protein localises to the cytoplasm. In terms of biological role, this protein is associated with nerve growth. It is a major component of the motile 'growth cones' that form the tips of elongating axons. Plays a role in axonal and dendritic filopodia induction. This Rattus norvegicus (Rat) protein is Neuromodulin (Gap43).